A 59-amino-acid polypeptide reads, in one-letter code: Large ribosomal subunit protein bL33 (59 aa).

It belongs to the bacterial ribosomal protein bL33 family.

This chain is Large ribosomal subunit protein bL33, found in Borreliella afzelii (strain PKo) (Borrelia afzelii).